The following is a 308-amino-acid chain: Ribosomal RNA large subunit methyltransferase F (308 aa).

The protein belongs to the methyltransferase superfamily. METTL16/RlmF family.

It localises to the cytoplasm. It carries out the reaction adenosine(1618) in 23S rRNA + S-adenosyl-L-methionine = N(6)-methyladenosine(1618) in 23S rRNA + S-adenosyl-L-homocysteine + H(+). Functionally, specifically methylates the adenine in position 1618 of 23S rRNA. The chain is Ribosomal RNA large subunit methyltransferase F from Shigella flexneri serotype 5b (strain 8401).